Here is an 87-residue protein sequence, read N- to C-terminus: Small ribosomal subunit protein uS17 (87 aa).

Belongs to the universal ribosomal protein uS17 family. Part of the 30S ribosomal subunit.

In terms of biological role, one of the primary rRNA binding proteins, it binds specifically to the 5'-end of 16S ribosomal RNA. This chain is Small ribosomal subunit protein uS17, found in Onion yellows phytoplasma (strain OY-M).